A 180-amino-acid polypeptide reads, in one-letter code: Interleukin-17B (180 aa).

An N-terminal signal peptide occupies residues 1-20; that stretch reads MDWPHNLLFLLTISIFLGLG. The interval 22–44 is disordered; it reads PRSPKSKRKGQGRPGPLAPGPHQ. The N-linked (GlcNAc...) asparagine glycan is linked to Asn-75. 2 cysteine pairs are disulfide-bonded: Cys-121-Cys-176 and Cys-126-Cys-178.

This sequence belongs to the IL-17 family. In terms of tissue distribution, expressed in adult pancreas, small intestine, stomach, spinal cord and testis. Less pronounced expression in prostate, colon mucosal lining, and ovary.

The protein localises to the secreted. Stimulates the release of tumor necrosis factor alpha and IL-1-beta from the monocytic cell line THP-1. In Homo sapiens (Human), this protein is Interleukin-17B (IL17B).